A 113-amino-acid polypeptide reads, in one-letter code: Flagellar transcriptional regulator FlhD (113 aa).

Belongs to the FlhD family. As to quaternary structure, homodimer; disulfide-linked. Forms a heterohexamer composed of two FlhC and four FlhD subunits. Each FlhC binds a FlhD dimer, forming a heterotrimer, and a hexamer assembles by dimerization of two heterotrimers.

It is found in the cytoplasm. Its function is as follows. Functions in complex with FlhC as a master transcriptional regulator that regulates transcription of several flagellar and non-flagellar operons by binding to their promoter region. Activates expression of class 2 flagellar genes, including fliA, which is a flagellum-specific sigma factor that turns on the class 3 genes. Also regulates genes whose products function in a variety of physiological pathways. The protein is Flagellar transcriptional regulator FlhD of Salmonella typhi.